The following is a 155-amino-acid chain: Endoribonuclease YbeY (155 aa).

Residues His117, His121, and His127 each contribute to the Zn(2+) site.

This sequence belongs to the endoribonuclease YbeY family. The cofactor is Zn(2+).

The protein resides in the cytoplasm. In terms of biological role, single strand-specific metallo-endoribonuclease involved in late-stage 70S ribosome quality control and in maturation of the 3' terminus of the 16S rRNA. This is Endoribonuclease YbeY from Dichelobacter nodosus (strain VCS1703A).